Reading from the N-terminus, the 433-residue chain is Enolase (433 aa).

Gln167 is a (2R)-2-phosphoglycerate binding site. The Proton donor role is filled by Glu209. Mg(2+)-binding residues include Asp246, Glu291, and Asp318. Lys343, Arg372, Ser373, and Lys394 together coordinate (2R)-2-phosphoglycerate. Lys343 acts as the Proton acceptor in catalysis.

This sequence belongs to the enolase family. In terms of assembly, component of the RNA degradosome, a multiprotein complex involved in RNA processing and mRNA degradation. The cofactor is Mg(2+).

It is found in the cytoplasm. The protein resides in the secreted. The protein localises to the cell surface. The catalysed reaction is (2R)-2-phosphoglycerate = phosphoenolpyruvate + H2O. Its pathway is carbohydrate degradation; glycolysis; pyruvate from D-glyceraldehyde 3-phosphate: step 4/5. Catalyzes the reversible conversion of 2-phosphoglycerate (2-PG) into phosphoenolpyruvate (PEP). It is essential for the degradation of carbohydrates via glycolysis. This is Enolase from Photobacterium profundum (strain SS9).